The following is a 287-amino-acid chain: BURP domain-containing protein 2 (287 aa).

An N-terminal signal peptide occupies residues Met1–Ala21. Residues Phe67–Asn287 enclose the BURP domain.

In terms of tissue distribution, expressed in shoot.

The protein is BURP domain-containing protein 2 (BURP2) of Oryza sativa subsp. japonica (Rice).